A 647-amino-acid polypeptide reads, in one-letter code: Protein RAD61 (647 aa).

The interval 1–90 is disordered; that stretch reads MRAYGKRGPV…QLDSKRNDQN (90 aa). Polar residues predominate over residues 66-82; sequence DSSSSFDGANEKPSSQL.

Its subcellular location is the nucleus. Its function is as follows. Involved in resistance to ionizing radiation. The chain is Protein RAD61 (RAD61) from Saccharomyces cerevisiae (strain ATCC 204508 / S288c) (Baker's yeast).